The chain runs to 428 residues: Serine--tRNA ligase (428 aa).

235–237 (TAE) contributes to the L-serine binding site. 266-268 (RSE) lines the ATP pocket. Glu289 is a binding site for L-serine. 353-356 (EISS) provides a ligand contact to ATP. L-serine is bound at residue Ser389.

Belongs to the class-II aminoacyl-tRNA synthetase family. Type-1 seryl-tRNA synthetase subfamily. In terms of assembly, homodimer. The tRNA molecule binds across the dimer.

It is found in the cytoplasm. It catalyses the reaction tRNA(Ser) + L-serine + ATP = L-seryl-tRNA(Ser) + AMP + diphosphate + H(+). The catalysed reaction is tRNA(Sec) + L-serine + ATP = L-seryl-tRNA(Sec) + AMP + diphosphate + H(+). It participates in aminoacyl-tRNA biosynthesis; selenocysteinyl-tRNA(Sec) biosynthesis; L-seryl-tRNA(Sec) from L-serine and tRNA(Sec): step 1/1. In terms of biological role, catalyzes the attachment of serine to tRNA(Ser). Is also able to aminoacylate tRNA(Sec) with serine, to form the misacylated tRNA L-seryl-tRNA(Sec), which will be further converted into selenocysteinyl-tRNA(Sec). The polypeptide is Serine--tRNA ligase (Shewanella oneidensis (strain ATCC 700550 / JCM 31522 / CIP 106686 / LMG 19005 / NCIMB 14063 / MR-1)).